Here is a 212-residue protein sequence, read N- to C-terminus: ER lumen protein-retaining receptor 2 (212 aa).

Topologically, residues 1-4 (MNVF) are lumenal. Residues 5-24 (RLSGDLCHLAAIIILLLKIW) traverse the membrane as a helical segment. Residues 25 to 32 (NSRSCAGI) are Cytoplasmic-facing. Residues 33–52 (SGKSQLLFAMVFTTRYLDLF) traverse the membrane as a helical segment. The interval 47 to 48 (RY) is interaction with the K-D-E-L motif on target proteins. Residues 53 to 58 (TSFISL) lie on the Lumenal side of the membrane. Residues 59–79 (YNTSMKVIYMGCAYATVYLIY) traverse the membrane as a helical segment. The Cytoplasmic portion of the chain corresponds to 80–92 (MKFKATYDGNHDT). Residues 93–110 (FRVEFLVVPVGGLSVLVN) traverse the membrane as a helical segment. Topologically, residues 111–116 (HDFSPL) are lumenal. A helical membrane pass occupies residues 117–135 (EILWTFSIYLESVAILPQL). Over 136 to 149 (FMISKTGEAETITT) the chain is Cytoplasmic. A helical membrane pass occupies residues 150–168 (HYLFFLGLYRALYLFNWIW). The tract at residues 159-169 (RALYLFNWIWR) is interaction with the K-D-E-L motif on target proteins. Over 169–178 (RFSFEGFFDL) the chain is Lumenal. The helical transmembrane segment at 179 to 199 (IAIVAGVVQTILYCDFFYLYV) threads the bilayer. Over 200–212 (TKVLKGKKLSLPA) the chain is Cytoplasmic. Residues 204 to 207 (KGKK) form an important for recycling of cargo proteins with the sequence motif K-D-E-L from the Golgi to the endoplasmic reticulum region.

It belongs to the ERD2 family.

It localises to the endoplasmic reticulum membrane. The protein resides in the golgi apparatus membrane. The protein localises to the cytoplasmic vesicle. It is found in the COPI-coated vesicle membrane. Its function is as follows. Receptor for the C-terminal sequence motif K-D-E-L that is present on endoplasmic reticulum resident proteins and that mediates their recycling from the Golgi back to the endoplasmic reticulum. Binding is pH dependent, and is optimal at pH 5-5.4. This is ER lumen protein-retaining receptor 2 (kdelr2) from Xenopus laevis (African clawed frog).